We begin with the raw amino-acid sequence, 328 residues long: Sulfate adenylyltransferase subunit 2 (328 aa).

Positions 309 to 328 (RAIDKDQTASMEKKKQEGYF) are disordered.

It belongs to the PAPS reductase family. CysD subfamily. Heterodimer composed of CysD, the smaller subunit, and CysN.

The enzyme catalyses sulfate + ATP + H(+) = adenosine 5'-phosphosulfate + diphosphate. It functions in the pathway sulfur metabolism; hydrogen sulfide biosynthesis; sulfite from sulfate: step 1/3. Its function is as follows. With CysN forms the ATP sulfurylase (ATPS) that catalyzes the adenylation of sulfate producing adenosine 5'-phosphosulfate (APS) and diphosphate, the first enzymatic step in sulfur assimilation pathway. APS synthesis involves the formation of a high-energy phosphoric-sulfuric acid anhydride bond driven by GTP hydrolysis by CysN coupled to ATP hydrolysis by CysD. This chain is Sulfate adenylyltransferase subunit 2, found in Hyphomonas neptunium (strain ATCC 15444).